The chain runs to 460 residues: MDQVLSKVTTTAATYATAYAVRTGLQLAGSLVAKRFSKYIQTSAPKSSQFNLELVKSRLEQKIQAITPAVDLIQLVAARGNSSLQNLVPLIIRLRDHIDDFLEFIDYEASGSEKKSPEKADEASEKIFRRCEVLLREIEETIPLINLSLTTAGITLNTALSNTISPSRLLQAQCFLELSDKRFEESHTEIQIGPKFTVVLYTSFSQPSKSDGPLDVRWQETFAKSDLYIKRVVSASQKFSYVICIDEDLNDGRYHEETVGKPTSAPVFGKKLEISLQRMSLLCYTVSGRLLNISQAKSPVLALQLTSIKDVSALDKAHQDNSEDLNNPFIKNNDKTKFHQNIDWIALEKYFEVNALDISDSESEDLSDILSDSEFSIGNRNKNIGNNEYSAQISSDPAEEEIANAMHSLKLEPETSIYLTNPGSLSLLEYLLRLCSLQELHQISCLEMTDSQLAAMLNSN.

The protein to yeast YGL164c.

This is an uncharacterized protein from Schizosaccharomyces pombe (strain 972 / ATCC 24843) (Fission yeast).